The following is a 337-amino-acid chain: Beta-hexosaminidase (337 aa).

Substrate is bound by residues aspartate 62, arginine 70, arginine 133, and lysine 163–histidine 164. The active-site Proton donor/acceptor is the histidine 176. Catalysis depends on aspartate 248, which acts as the Nucleophile.

Belongs to the glycosyl hydrolase 3 family. NagZ subfamily.

The protein resides in the cytoplasm. It carries out the reaction Hydrolysis of terminal non-reducing N-acetyl-D-hexosamine residues in N-acetyl-beta-D-hexosaminides.. It functions in the pathway cell wall biogenesis; peptidoglycan recycling. Plays a role in peptidoglycan recycling by cleaving the terminal beta-1,4-linked N-acetylglucosamine (GlcNAc) from peptide-linked peptidoglycan fragments, giving rise to free GlcNAc, anhydro-N-acetylmuramic acid and anhydro-N-acetylmuramic acid-linked peptides. The sequence is that of Beta-hexosaminidase from Psychromonas ingrahamii (strain DSM 17664 / CCUG 51855 / 37).